Consider the following 110-residue polypeptide: Thiosulfate sulfurtransferase GlpE (110 aa).

One can recognise a Rhodanese domain in the interval 17-105 (KKEGAVVVDI…WRATYPAETA (89 aa)). Cys-65 acts as the Cysteine persulfide intermediate in catalysis.

It belongs to the GlpE family.

It is found in the cytoplasm. It carries out the reaction thiosulfate + hydrogen cyanide = thiocyanate + sulfite + 2 H(+). The catalysed reaction is thiosulfate + [thioredoxin]-dithiol = [thioredoxin]-disulfide + hydrogen sulfide + sulfite + 2 H(+). Transferase that catalyzes the transfer of sulfur from thiosulfate to thiophilic acceptors such as cyanide or dithiols. May function in a CysM-independent thiosulfate assimilation pathway by catalyzing the conversion of thiosulfate to sulfite, which can then be used for L-cysteine biosynthesis. The polypeptide is Thiosulfate sulfurtransferase GlpE (Pseudomonas putida (strain ATCC 700007 / DSM 6899 / JCM 31910 / BCRC 17059 / LMG 24140 / F1)).